A 1400-amino-acid polypeptide reads, in one-letter code: Tiny macrocysts protein C (1400 aa).

8 consecutive transmembrane segments (helical) span residues Ile-59–Gln-79, Ile-112–Ala-132, Phe-152–Leu-172, Ala-196–Phe-216, Phe-240–Phe-260, Ser-266–Tyr-286, Ser-296–Asn-316, and Thr-320–Phe-340. Disordered stretches follow at residues Phe-367–Thr-393 and Glu-683–Tyr-712. Positions Glu-369 to Ser-386 are enriched in basic and acidic residues. A run of 4 helical transmembrane segments spans residues Trp-726–Leu-746, Thr-975–Phe-995, Val-1162–Val-1182, and Val-1342–Phe-1362.

Its subcellular location is the membrane. This is Tiny macrocysts protein C (tmcC) from Dictyostelium discoideum (Social amoeba).